The following is a 746-amino-acid chain: Protein O-mannosyl-transferase 1 (746 aa).

7 helical membrane passes run 30-50 (PLVVTVDINLNLVALTGLGLL), 90-110 (FGHMLLALGGWLGGFDGNFLW), 121-141 (VPIWSLRLLPALAGALSVPMA), 144-164 (IVLELHFSHGAAIGAALLMLI), 176-196 (LLESILIFFNLLAVLSYLKFF), 228-248 (MGIFTYLLVLGIAAVHAWNLI), and 266-286 (IVALLVVPVFLYLLFFYVHLM). 3 consecutive MIR domains span residues 318–381 (PLEV…VKDP), 392–449 (PRPV…LDIV), and 453–513 (SNRD…VEEH). N-linked (GlcNAc...) asparagine glycans are attached at residues N435, N471, and N539. The next 3 membrane-spanning stretches (helical) occupy residues 597–617 (IVIWTSASLATVVYTLLFFWY), 636–656 (WVLAGALCTGGWALNYLPFFL), and 660–680 (VLFLYHYLPALTFQILLLPIV).

It belongs to the glycosyltransferase 39 family.

Its subcellular location is the endoplasmic reticulum membrane. It catalyses the reaction a di-trans,poly-cis-dolichyl beta-D-mannosyl phosphate + L-seryl-[protein] = 3-O-(alpha-D-mannosyl)-L-seryl-[protein] + a di-trans,poly-cis-dolichyl phosphate + H(+). The catalysed reaction is a di-trans,poly-cis-dolichyl beta-D-mannosyl phosphate + L-threonyl-[protein] = 3-O-(alpha-D-mannosyl)-L-threonyl-[protein] + a di-trans,poly-cis-dolichyl phosphate + H(+). It functions in the pathway protein modification; protein glycosylation. Its function is as follows. Transfers mannosyl residues to the hydroxyl group of serine or threonine residues. Coexpression of both POMT1 and POMT2 is necessary for enzyme activity, expression of either POMT1 or POMT2 alone is insufficient. Essentially dedicated to O-mannosylation of alpha-DAG1 and few other proteins but not of cadherins and protocaherins. This is Protein O-mannosyl-transferase 1 (Pomt1) from Mus musculus (Mouse).